The primary structure comprises 282 residues: Anamorsin homolog (282 aa).

Positions 5–151 (VDTNNFVLLL…EVGAKTALSL (147 aa)) are N-terminal SAM-like domain. Positions 152-196 (SFAPKPAQPKAETSAAQIWTLSAQDIDDEDVDLLDSDTLLDEDDL) are linker. 4 residues coordinate [2Fe-2S] cluster: Cys208, Cys218, Cys221, and Cys223. The interval 208–223 (CGPGSGKKKACKNCTC) is fe-S binding site A. Positions 243, 246, 254, and 257 each coordinate [4Fe-4S] cluster. 2 short sequence motifs (cx2C motif) span residues 243–246 (CGSC) and 254–257 (CSTC). The fe-S binding site B stretch occupies residues 243–257 (CGSCYLGDAFRCSTC).

Belongs to the anamorsin family. Monomer. Requires [2Fe-2S] cluster as cofactor. [4Fe-4S] cluster serves as cofactor.

It localises to the cytoplasm. The protein localises to the mitochondrion intermembrane space. In terms of biological role, component of the cytosolic iron-sulfur (Fe-S) protein assembly (CIA) machinery. Required for the maturation of extramitochondrial Fe-S proteins. Part of an electron transfer chain functioning in an early step of cytosolic Fe-S biogenesis, facilitating the de novo assembly of a [4Fe-4S] cluster on the cytosolic Fe-S scaffold complex. Electrons are transferred from NADPH via a FAD- and FMN-containing diflavin oxidoreductase. Together with the diflavin oxidoreductase, also required for the assembly of the diferric tyrosyl radical cofactor of ribonucleotide reductase (RNR), probably by providing electrons for reduction during radical cofactor maturation in the catalytic small subunit. This is Anamorsin homolog from Nematostella vectensis (Starlet sea anemone).